Consider the following 47-residue polypeptide: Large ribosomal subunit protein bL34 (47 aa).

Belongs to the bacterial ribosomal protein bL34 family.

In Mycobacterium tuberculosis (strain ATCC 25177 / H37Ra), this protein is Large ribosomal subunit protein bL34.